A 269-amino-acid polypeptide reads, in one-letter code: GTP cyclohydrolase FolE2 (269 aa).

This sequence belongs to the GTP cyclohydrolase IV family.

It carries out the reaction GTP + H2O = 7,8-dihydroneopterin 3'-triphosphate + formate + H(+). Its pathway is cofactor biosynthesis; 7,8-dihydroneopterin triphosphate biosynthesis; 7,8-dihydroneopterin triphosphate from GTP: step 1/1. Converts GTP to 7,8-dihydroneopterin triphosphate. The protein is GTP cyclohydrolase FolE2 of Azoarcus sp. (strain BH72).